Consider the following 205-residue polypeptide: Thymidylate kinase (205 aa).

7-14 (GIDGSGKT) contributes to the ATP binding site.

Belongs to the thymidylate kinase family.

It carries out the reaction dTMP + ATP = dTDP + ADP. Its function is as follows. Phosphorylation of dTMP to form dTDP in both de novo and salvage pathways of dTTP synthesis. This is Thymidylate kinase from Wolbachia sp. subsp. Brugia malayi (strain TRS).